We begin with the raw amino-acid sequence, 195 residues long: MELEVFAGQEKSELSMIEVARAILELRGRDHEMHFSDLVNEIQNYLGTSNSDIREALPLFYTELNFDGSFISLGDNKWGLRSWYGVDEIDEEIIALEENDDDEVAPKAKKKRVNAFMDGDSDAIDYNADDPEDEDAYEADPALSYDDENPDDEKNEVEAYDAEINEIAPDDLGEDVDLNEDDDEFSDDDAETSEE.

One can recognise an HTH HARE-type domain in the interval 14–83 (LSMIEVARAI…GDNKWGLRSW (70 aa)). Composition is skewed to acidic residues over residues 120 to 138 (DSDA…DAYE) and 145 to 195 (YDDE…TSEE). A disordered region spans residues 120 to 195 (DSDAIDYNAD…SDDDAETSEE (76 aa)).

Belongs to the RpoE family. RNAP is composed of a core of 2 alpha, a beta and a beta' subunits. The core is associated with a delta subunit and one of several sigma factors.

Participates in both the initiation and recycling phases of transcription. In the presence of the delta subunit, RNAP displays an increased specificity of transcription, a decreased affinity for nucleic acids, and an increased efficiency of RNA synthesis because of enhanced recycling. The sequence is that of Probable DNA-directed RNA polymerase subunit delta from Streptococcus pneumoniae serotype 2 (strain D39 / NCTC 7466).